Reading from the N-terminus, the 361-residue chain is Protein RecA (361 aa).

77 to 84 (GPESSGKT) serves as a coordination point for ATP.

It belongs to the RecA family.

It localises to the cytoplasm. Its function is as follows. Can catalyze the hydrolysis of ATP in the presence of single-stranded DNA, the ATP-dependent uptake of single-stranded DNA by duplex DNA, and the ATP-dependent hybridization of homologous single-stranded DNAs. It interacts with LexA causing its activation and leading to its autocatalytic cleavage. The protein is Protein RecA of Brucella suis (strain ATCC 23445 / NCTC 10510).